Reading from the N-terminus, the 356-residue chain is Protein pelota homolog (356 aa).

Belongs to the eukaryotic release factor 1 family. Pelota subfamily. In terms of assembly, monomer. A divalent metal cation is required as a cofactor.

It is found in the cytoplasm. May function in recognizing stalled ribosomes, interact with stem-loop structures in stalled mRNA molecules, and effect endonucleolytic cleavage of the mRNA. May play a role in the release non-functional ribosomes and degradation of damaged mRNAs. Has endoribonuclease activity. The polypeptide is Protein pelota homolog (Staphylothermus marinus (strain ATCC 43588 / DSM 3639 / JCM 9404 / F1)).